Reading from the N-terminus, the 477-residue chain is Histone-lysine N-methyltransferase SUV39H2 (477 aa).

The interval 1 to 59 (MATARAKARGSEAGARCHRAPGPPPRPKARRTARRRRAETLTARRSRPSAGERRAGSQR) is disordered. Residues 27–37 (PKARRTARRRR) are compositionally biased toward basic residues. The Chromo domain maps to 118 to 176 (YEVEYLCDYKVAKGVEYYLVKWKGWPDSTNTWEPLRNLRCPQLLRQFSDDKKTYLAQER). One can recognise a Pre-SET domain in the interval 256 to 314 (FGCSCTDCFFDKCCPAEAGVVLAYNKKQQIKIQPGTPIYECNSRCRCGPECPNRIVQKG). Zn(2+) is bound by residues C258, C260, C263, C268, C269, C296, C300, C302, and C306. In terms of domain architecture, SET spans 317–440 (YSLCIFKTSN…AGEELTFDYQ (124 aa)). S-adenosyl-L-methionine-binding positions include 328 to 330 (CGW), Y371, and 397 to 398 (NH). A Zn(2+)-binding site is contributed by C400. Residues S448, S451, and S455 each carry the phosphoserine modification. In terms of domain architecture, Post-SET spans 461 to 477 (VRTQCKCGAETCRGYLN). Residues C465, C467, and C472 each contribute to the Zn(2+) site.

The protein belongs to the class V-like SAM-binding methyltransferase superfamily. Histone-lysine methyltransferase family. Suvar3-9 subfamily. In terms of assembly, interacts with SMAD5. The large PER complex involved in the histone methylation is composed of at least PER2, CBX3, TRIM28, SUV39H1 and/or SUV39H2; CBX3 mediates the formation of the complex. In terms of processing, ubiquitinated by the DCX(DCAF13) E3 ubiquitin ligase complex, leading to its degradation. As to expression, testis specific; predominant expression in type B spermatogonia and preleptotene spermatocytes.

It is found in the nucleus. Its subcellular location is the chromosome. It localises to the centromere. It catalyses the reaction L-lysyl(9)-[histone H3] + 3 S-adenosyl-L-methionine = N(6),N(6),N(6)-trimethyl-L-lysyl(9)-[histone H3] + 3 S-adenosyl-L-homocysteine + 3 H(+). Its function is as follows. Histone methyltransferase that specifically trimethylates 'Lys-9' of histone H3 using monomethylated H3 'Lys-9' as substrate. H3 'Lys-9' trimethylation represents a specific tag for epigenetic transcriptional repression by recruiting HP1 (CBX1, CBX3 and/or CBX5) proteins to methylated histones. Mainly functions in heterochromatin regions, thereby playing a central role in the establishment of constitutive heterochromatin at pericentric and telomere regions. H3 'Lys-9' trimethylation is also required to direct DNA methylation at pericentric repeats. SUV39H1 is targeted to histone H3 via its interaction with RB1 and is involved in many processes, such as cell cycle regulation, transcriptional repression and regulation of telomere length. May participate in regulation of higher-order chromatin organization during spermatogenesis. Recruited by the large PER complex to the E-box elements of the circadian target genes such as PER2 itself or PER1, contributes to the conversion of local chromatin to a heterochromatin-like repressive state through H3 'Lys-9' trimethylation. In Mus musculus (Mouse), this protein is Histone-lysine N-methyltransferase SUV39H2 (Suv39h2).